The following is a 953-amino-acid chain: MTAAENVCYTLINVPMDSEPPSEISLKNDLEKGDVKSKTEALKKVIIMILNGEKLPGLLMTIIRFVLPLQDHTIKKLLLVFWEIVPKTTPDGRLLHEMILVCDAYRKDLQHPNEFIRGSTLRFLCKLKEAELLEPLMPAIRACLEHRHSYVRRNAVLAIYTIYRNFEHLIPDAPELIHDFLVDEKDASCKRNAFMMLIHADQDRALDYLSTCIDQVQTFGDILQLVIVELIYKACHANPSERARFIRCIYNLLQSSSPAVKYEAAGTLVTLSSAPTAIKAAAQCYIDLIIKESDNNVKLIVLDRLIELKEHPAHERVLQDLVMDILRVLSTPDLEVRKKTLQLALDLVSSRNVEELVIVLKKEVIKTNNVSEHEDTDKYRQLLVRTLHSCSVRFPDMAANVIPVLMEFLSDNNEAAAADVLEFVREAIQRFDNLRMLIVEKMLEVFHAIKSVKIYRGALWILGEYCSTKEDIQSVMTEIRRSLGEIPIVESEIKKEAGELKPEEEITVGPVQKLVTEMGTYATQSALSSSRPTKKEEDRPPLRGFLLDGDFFVAASLATTLTKIALRYVALVQEKKKQNSFVAEAMLLMATILHLGKSSLPKKPITDDDVDRISLCLKVLSECSPLMNDIFNKECRQSLSHMLSAKLEEEKLSQKKESEKRNVTVQPDDPISFMQLTAKNEMNCKEDQFQLSLLAAMGNTQRKEAADPLASKLNKVTQLTGFSDPVYAEAYVHVNQYDIVLDVLVVNQTSDTLQNCTLELATLGDLKLVEKPSPLTLAPHDFANIKANVKVASTENGIIFGNIVYDVSGAASDRNCVVLSDIHIDIMDYIQPATCTDAEFRQMWAEFEWENKVTVNTNMIDLNDYLRHILKSTNMKCLTPEKALSGYCGFMAANLYARSIFGEDALANVSIEKPIHQGPDAAVTGHIRIRAKSQGMALSLGDKINLSQKKTSI.

Thr-2 is subject to N-acetylthreonine. HEAT repeat units follow at residues 96–131 (HEMI…KEAE), 132–168 (LLEP…NFEH), 240–276 (SERA…SAPT), 277–314 (AIKA…HPAH), 316–353 (RVLQ…SRNV), and 396–433 (DMAA…RFDN). Lys-494 carries the N6-acetyllysine modification.

As to quaternary structure, oligomeric complex that consists of at least the alpha, beta, beta', gamma, delta, epsilon and zeta subunits. Interacts (via C-terminus) with HIV-1 Nef; the interaction is direct. Interacts with CAPN8 and PRKCE. Interacts with SCYL1. Interacts with COPG1. Interacts with ARF1 (myristoylated); this interaction is required for binding of COPB1 to Golgi membranes. Interacts (via trunk domain) with ARF1 (via switch I region); the interaction is direct. Interacts with KCNK2 (via N-terminus); this interaction increases the channel-mediated whole cell currents and promotes plasma membrane expression of KCNK2. Interacts with anthrax lethal factor (LF); this interaction may facilitate endosomal vesicle membrane translocation of LF and its release from the lumen of endosomal vesicles to external milieu. Interacts with STX17. Interacts with TMEM115. Interacts with TMEM41B.

Its subcellular location is the cytoplasm. It is found in the golgi apparatus membrane. The protein resides in the cytoplasmic vesicle. The protein localises to the COPI-coated vesicle membrane. It localises to the cell membrane. Its subcellular location is the endoplasmic reticulum-Golgi intermediate compartment. In terms of biological role, the coatomer is a cytosolic protein complex that binds to dilysine motifs and reversibly associates with Golgi non-clathrin-coated vesicles, which further mediate biosynthetic protein transport from the ER, via the Golgi up to the trans Golgi network. Coatomer complex is required for budding from Golgi membranes, and is essential for the retrograde Golgi-to-ER transport of dilysine-tagged proteins. In mammals, the coatomer can only be recruited by membranes associated to ADP-ribosylation factors (ARFs), which are small GTP-binding proteins; the complex also influences the Golgi structural integrity, as well as the processing, activity, and endocytic recycling of LDL receptors. Plays a functional role in facilitating the transport of kappa-type opioid receptor mRNAs into axons and enhances translation of these proteins. Required for limiting lipid storage in lipid droplets. Involved in lipid homeostasis by regulating the presence of perilipin family members PLIN2 and PLIN3 at the lipid droplet surface and promoting the association of adipocyte surface triglyceride lipase (PNPLA2) with the lipid droplet to mediate lipolysis. Involved in the Golgi disassembly and reassembly processes during cell cycle. Involved in autophagy by playing a role in early endosome function. Plays a role in organellar compartmentalization of secretory compartments including endoplasmic reticulum (ER)-Golgi intermediate compartment (ERGIC), Golgi, trans-Golgi network (TGN) and recycling endosomes, and in biosynthetic transport of CAV1. Promotes degradation of Nef cellular targets CD4 and MHC class I antigens by facilitating their trafficking to degradative compartments. This Pongo abelii (Sumatran orangutan) protein is Coatomer subunit beta (COPB1).